The sequence spans 127 residues: Aspartate 1-decarboxylase (127 aa).

Serine 25 (schiff-base intermediate with substrate; via pyruvic acid) is an active-site residue. Residue serine 25 is modified to Pyruvic acid (Ser). Substrate is bound at residue threonine 57. Tyrosine 58 functions as the Proton donor in the catalytic mechanism. 73 to 75 is a binding site for substrate; the sequence is GAA.

The protein belongs to the PanD family. As to quaternary structure, heterooctamer of four alpha and four beta subunits. The cofactor is pyruvate. Post-translationally, is synthesized initially as an inactive proenzyme, which is activated by self-cleavage at a specific serine bond to produce a beta-subunit with a hydroxyl group at its C-terminus and an alpha-subunit with a pyruvoyl group at its N-terminus.

The protein localises to the cytoplasm. The catalysed reaction is L-aspartate + H(+) = beta-alanine + CO2. It functions in the pathway cofactor biosynthesis; (R)-pantothenate biosynthesis; beta-alanine from L-aspartate: step 1/1. In terms of biological role, catalyzes the pyruvoyl-dependent decarboxylation of aspartate to produce beta-alanine. The chain is Aspartate 1-decarboxylase from Clostridium botulinum (strain Okra / Type B1).